The following is a 334-amino-acid chain: G2/mitotic-specific cyclin-1 (334 aa).

It belongs to the cyclin family. Cyclin AB subfamily.

Functionally, essential for the control of the cell cycle at the G2/M (mitosis) transition. The sequence is that of G2/mitotic-specific cyclin-1 (CYC1) from Trypanosoma brucei brucei.